We begin with the raw amino-acid sequence, 105 residues long: MKSHKMMGGGISMHYITACLKIISDKDLNEIMKEFKKLEEETNKEEGCITFHAYPLEPSERKIMLWEIWENEEAVKIHFTKKHTIDVQKQELTEVEWLMKSNVND.

The ABM domain maps to histidine 14–asparagine 104.

This is an uncharacterized protein from Bacillus subtilis (strain 168).